The chain runs to 362 residues: Cobalt-precorrin-5B C(1)-methyltransferase (362 aa).

Belongs to the CbiD family.

It carries out the reaction Co-precorrin-5B + S-adenosyl-L-methionine = Co-precorrin-6A + S-adenosyl-L-homocysteine. It functions in the pathway cofactor biosynthesis; adenosylcobalamin biosynthesis; cob(II)yrinate a,c-diamide from sirohydrochlorin (anaerobic route): step 6/10. In terms of biological role, catalyzes the methylation of C-1 in cobalt-precorrin-5B to form cobalt-precorrin-6A. This chain is Cobalt-precorrin-5B C(1)-methyltransferase, found in Desulfotalea psychrophila (strain LSv54 / DSM 12343).